The primary structure comprises 507 residues: Probable circularly permuted 1,3-beta-glucanase P23A10.11c YJL171C (507 aa).

The signal sequence occupies residues 1–22 (MIAKSFIASFLFLCFAFSGVKA). Residues 228–264 (AAPPDSASESTPASTSYASSTTSATSTSTTSGSSGSS) show a composition bias toward low complexity. The disordered stretch occupies residues 228-266 (AAPPDSASESTPASTSYASSTTSATSTSTTSGSSGSSDW). An ExDxxE motif motif is present at residues 412 to 417 (EFDIFE). The N-linked (GlcNAc...) asparagine glycan is linked to N480.

The protein belongs to the PGA52 family.

Its subcellular location is the secreted. The enzyme catalyses Hydrolysis of (1-&gt;3)-beta-D-glucosidic linkages in (1-&gt;3)-beta-D-glucans.. Functionally, probable circularly permuted 1,3-beta-glucanase involved in cell wall modification through beta-1,3-glucan network alterations such as increased branching or remodeling. This is Probable circularly permuted 1,3-beta-glucanase P23A10.11c YJL171C from Schizosaccharomyces pombe (strain 972 / ATCC 24843) (Fission yeast).